We begin with the raw amino-acid sequence, 512 residues long: Cytochrome P450 monooxygenase FrzL (512 aa).

The chain crosses the membrane as a helical span at residues 6 to 26; that stretch reads TMLAFVPYLAVFVACYGLVYY. Heme is bound at residue C423.

This sequence belongs to the cytochrome P450 family. The cofactor is heme.

It is found in the membrane. In terms of biological role, cytochrome P450 monooxygenase; part of the gene cluster that mediates the biosynthesis of the alkaloid (-)-FR901483, a potent immunosuppressant that shows efficacy in animal models and a probable inhibitor of purine nucleotide biosynthesis by targeting phosphoribosylpyrophosphate amidotransferase (PPAT). The only unassigned enzyme in the cluster is the second cytochrome P450 monooxygenase FrzL. The biosynthesis of (-)-FR901483 starts with the condensation of two L-tyrosines to yield (S,S)-dityrosyl-piperazine. This process occurs in 3 steps with the non-canonical nonribosomal peptide synthetase FrzA catalyzing the reduction of L-tyrosine into L-tyrosinal, the spontaneous condensation of 2 L-tyrosinal units, and the subsequent reduction by the NmrA-like family domain-containing oxidoreductase FrzB. The cytochrome P450 monooxygenase FrzC then performs coupling between N10 and C1' to morph the piperazine into a 1,4-diazabicyclo[3.2.1]octane spiro-fused to a 2,5-cyclohexadienone. The dienone portion is further reduced to cyclohexanone by the flavin-dependent reductase FrzD. The methyltranserases (MTs) FrzE and FrzF are then involved in the methylation at the C10' amine and the C4 phenolic oxygen, respectively. The order of the two MTs appear to be interchangeable. Cleavage of the C9-N10' bond by the dioxygenase FrzG then leads to formation of a conjugated iminium. In addition to the oxidation of C9, an additional dehydrogenation between C7 and C8 can occur to give a likely shunt product. The next biosynthetic step is the intramolecular aldol condensation catalyzed by the newly identified aldolase FrzH to yield an aza-tricyclic product with the formation of a C9-C3' bond. The short-chain dehydrogenase/reductase FrzI then produces dephospho-(-)-FR901483 that is phosphorylated at C4'-OH into (-)-FR901483 by the phosphotransferase FrzJ. The polypeptide is Cytochrome P450 monooxygenase FrzL (Cladobotryum sp).